The following is a 149-amino-acid chain: MTANFSTHVFSPQHCGCDRLTSIDDVRQCLTEYIYWSSYAYRNRQCAGQLYDTLLSFKDDAESVFIDVRELVKNMPWDNVKDCTEIIRCYIPDEQKTIREISAIIGLCAYAATYWGGEDHPTSNSLNALFVMLEMLNYMDYTIIFWRMN.

Belongs to the orthopoxvirus OPG200 family. As to quaternary structure, homodimers. Interacts with host IKBKB; this interaction inhibits host NF-kappa-B activation.

Its function is as follows. Contributes to virulence by binding to the host IKBKB subunit of the IKK complex and preventing host NF-kappa-B activation in response to pro-inflammatory stimuli such as TNF-alpha or IL1B. Mechanistically, sterically hinders the direct contact between the kinase domains of IKBKB in the IKK complex containing IKBKB, CHUK/IKKA and NEMO. The chain is Protein OPG200 (OPG200) from Cynomys gunnisoni (Gunnison's prairie dog).